The following is a 468-amino-acid chain: Argininosuccinate lyase (468 aa).

Belongs to the lyase 1 family. Argininosuccinate lyase subfamily.

Its subcellular location is the cytoplasm. It carries out the reaction 2-(N(omega)-L-arginino)succinate = fumarate + L-arginine. Its pathway is amino-acid biosynthesis; L-arginine biosynthesis; L-arginine from L-ornithine and carbamoyl phosphate: step 3/3. The chain is Argininosuccinate lyase from Paraburkholderia phytofirmans (strain DSM 17436 / LMG 22146 / PsJN) (Burkholderia phytofirmans).